The following is a 503-amino-acid chain: Maturase K (503 aa).

The protein belongs to the intron maturase 2 family. MatK subfamily.

It is found in the plastid. The protein resides in the chloroplast. In terms of biological role, usually encoded in the trnK tRNA gene intron. Probably assists in splicing its own and other chloroplast group II introns. The sequence is that of Maturase K from Vicia faba (Broad bean).